Reading from the N-terminus, the 392-residue chain is MVLLSILRILFLCELVLFMEHRAQMAEGGQSSIALLAEAPTLPLIEELLEESPGEQPRKPRLLGHSLRYMLELYRRSADSHGHPRENRTIGATMVRLVKPLTNVARPHRGTWHIQILGFPLRPNRGLYQLVRATVVYRHHLQLTRFNLSCHVEPWVQKNPTNHFPSSEGDSSKPSLMSNAWKEMDITQLVQQRFWNNKGHRILRLRFMCQQQKDSGGLELWHGTSSLDIAFLLLYFNDTHKSIRKAKFLPRGMEEFMERESLLRRTRQADGISAEVTASSSKHSGPENNQCSLHPFQISFRQLGWDHWIIAPPFYTPNYCKGTCLRVLRDGLNSPNHAIIQNLINQLVDQSVPRPSCVPYKYVPISVLMIEANGSILYKEYEGMIAESCTCR.

The N-terminal stretch at 1–18 (MVLLSILRILFLCELVLF) is a signal peptide. A propeptide spanning residues 19 to 267 (MEHRAQMAEG…ERESLLRRTR (249 aa)) is cleaved from the precursor. Asn-87, Asn-147, and Asn-237 each carry an N-linked (GlcNAc...) asparagine glycan. Pyrrolidone carboxylic acid; in P16 and P17 is present on Gln-268. Ser-273 carries the post-translational modification Phosphoserine; in P16. Thr-277 carries an O-linked (HexNAc...) threonine; in P17 glycan. 3 disulfides stabilise this stretch: Cys-291/Cys-357, Cys-320/Cys-389, and Cys-324/Cys-391. A glycan (N-linked (GlcNAc...) asparagine) is linked at Asn-373.

The protein belongs to the TGF-beta family. As to quaternary structure, homodimer. But, in contrast to other members of this family, cannot be disulfide-linked.

Its subcellular location is the secreted. May be involved in follicular development. Oocyte-specific growth/differentiation factor that stimulates folliculogenesis and granulosa cell (GC) growth. The sequence is that of Bone morphogenetic protein 15 (BMP15) from Homo sapiens (Human).